A 60-amino-acid chain; its full sequence is Large ribosomal subunit protein uL30 (60 aa).

Belongs to the universal ribosomal protein uL30 family. Part of the 50S ribosomal subunit.

This Streptomyces griseus subsp. griseus (strain JCM 4626 / CBS 651.72 / NBRC 13350 / KCC S-0626 / ISP 5235) protein is Large ribosomal subunit protein uL30.